The following is a 498-amino-acid chain: ATP synthase subunit beta, chloroplastic (498 aa).

172–179 (GGAGVGKT) is an ATP binding site.

It belongs to the ATPase alpha/beta chains family. In terms of assembly, F-type ATPases have 2 components, CF(1) - the catalytic core - and CF(0) - the membrane proton channel. CF(1) has five subunits: alpha(3), beta(3), gamma(1), delta(1), epsilon(1). CF(0) has four main subunits: a(1), b(1), b'(1) and c(9-12).

The protein localises to the plastid. Its subcellular location is the chloroplast thylakoid membrane. It carries out the reaction ATP + H2O + 4 H(+)(in) = ADP + phosphate + 5 H(+)(out). Functionally, produces ATP from ADP in the presence of a proton gradient across the membrane. The catalytic sites are hosted primarily by the beta subunits. The chain is ATP synthase subunit beta, chloroplastic from Magnolia tripetala (Umbrella-tree).